The chain runs to 525 residues: GMP synthase [glutamine-hydrolyzing] (525 aa).

One can recognise a Glutamine amidotransferase type-1 domain in the interval 9 to 207 (RILILDFGSQ…ILDICGCEAL (199 aa)). C86 (nucleophile) is an active-site residue. Catalysis depends on residues H181 and E183. The GMPS ATP-PPase domain occupies 208–400 (WTPSKIAEDA…LGLPYDMVYR (193 aa)). 235 to 241 (SGGVDSS) is an ATP binding site.

As to quaternary structure, homodimer.

The enzyme catalyses XMP + L-glutamine + ATP + H2O = GMP + L-glutamate + AMP + diphosphate + 2 H(+). The protein operates within purine metabolism; GMP biosynthesis; GMP from XMP (L-Gln route): step 1/1. In terms of biological role, catalyzes the synthesis of GMP from XMP. The chain is GMP synthase [glutamine-hydrolyzing] from Pseudomonas fluorescens (strain ATCC BAA-477 / NRRL B-23932 / Pf-5).